The chain runs to 479 residues: Ribulose bisphosphate carboxylase large chain (479 aa).

Positions Met-1–Ser-2 are excised as a propeptide. The substrate site is built by Asn-123 and Thr-173. Lys-175 functions as the Proton acceptor in the catalytic mechanism. Lys-177 is a binding site for substrate. The Mg(2+) site is built by Lys-201, Asp-203, and Glu-204. N6-carboxylysine is present on Lys-201. A Phosphoserine modification is found at Ser-208. The active-site Proton acceptor is His-294. Positions 295 and 327 each coordinate substrate. Thr-330 carries the post-translational modification Phosphothreonine. Ser-379 is a substrate binding site.

The protein belongs to the RuBisCO large chain family. Type I subfamily. In terms of assembly, heterohexadecamer of 8 large chains and 8 small chains; disulfide-linked. The disulfide link is formed within the large subunit homodimers. It depends on Mg(2+) as a cofactor. In terms of processing, the disulfide bond which can form in the large chain dimeric partners within the hexadecamer appears to be associated with oxidative stress and protein turnover.

The protein localises to the plastid. It is found in the chloroplast. The enzyme catalyses 2 (2R)-3-phosphoglycerate + 2 H(+) = D-ribulose 1,5-bisphosphate + CO2 + H2O. It carries out the reaction D-ribulose 1,5-bisphosphate + O2 = 2-phosphoglycolate + (2R)-3-phosphoglycerate + 2 H(+). Functionally, ruBisCO catalyzes two reactions: the carboxylation of D-ribulose 1,5-bisphosphate, the primary event in carbon dioxide fixation, as well as the oxidative fragmentation of the pentose substrate in the photorespiration process. Both reactions occur simultaneously and in competition at the same active site. This is Ribulose bisphosphate carboxylase large chain from Arabis hirsuta (Hairy rock-cress).